The chain runs to 363 residues: MTAPAPRPGIMDIRPYVGGESAIEGVDRILKLSSNEGALGPSPKAMEALRAMAPEMHRYPDGGAEDLRKAIGARFGLDASRIVCGAGSDELLGILCRAYAGPGDEVLYSAHGFLMYAIAAKACGATPVTAPEVDLTANVDNLLAAVTPRTKILFLANPNNPTGTYLPATEVARLRAGLRADILLVIDAAYTEFVSRNDYSGGIELVEAGDNVVVCRTFSKMYALGGLRLGWAYCPENVAGVLNRVRNPFNVGAPALAAGLAAFNDTAYAELCKSHNDYWLPWLSGQLAELGLTVVPSVCNFILVRFPKDAGKDAGAADKFLRSKGIIVRAMGGYGLGDCLRITIGTGEENQLVVAALKEFVGA.

An N6-(pyridoxal phosphate)lysine modification is found at Lys220.

The protein belongs to the class-II pyridoxal-phosphate-dependent aminotransferase family. Histidinol-phosphate aminotransferase subfamily. Homodimer. The cofactor is pyridoxal 5'-phosphate.

The enzyme catalyses L-histidinol phosphate + 2-oxoglutarate = 3-(imidazol-4-yl)-2-oxopropyl phosphate + L-glutamate. The protein operates within amino-acid biosynthesis; L-histidine biosynthesis; L-histidine from 5-phospho-alpha-D-ribose 1-diphosphate: step 7/9. The chain is Histidinol-phosphate aminotransferase from Paramagnetospirillum magneticum (strain ATCC 700264 / AMB-1) (Magnetospirillum magneticum).